Reading from the N-terminus, the 66-residue chain is Large ribosomal subunit protein bL32 (66 aa).

The protein belongs to the bacterial ribosomal protein bL32 family.

The protein is Large ribosomal subunit protein bL32 of Acetivibrio thermocellus (strain ATCC 27405 / DSM 1237 / JCM 9322 / NBRC 103400 / NCIMB 10682 / NRRL B-4536 / VPI 7372) (Clostridium thermocellum).